Reading from the N-terminus, the 275-residue chain is Adenylate kinase 2 (275 aa).

G2 carries the N-myristoyl glycine lipid modification. The interval 21-30 is required for cell membrane translocation but dispensable for cell membrane localization; sequence KKKEKKKKKK. 39 to 44 is an ATP binding site; the sequence is GSGKDT. The tract at residues 59-97 is NMP; sequence CISKLLKEYKEEYNKENVLNEEENYFDEIEKCMIDGSLV. AMP is bound by residues 95–97, 126–129, and Q133; these read SLV and GFPR. R164 serves as a coordination point for ATP. The tract at residues 165–214 is LID; it reads IIDPITNISYNENIIQIIKKKREGQELSDKEQKQLIIDNHLYNNLSNDIL. AMP contacts are provided by R220 and R231.

The protein belongs to the adenylate kinase family. In terms of assembly, monomer. Oligomer. Heterodimer composed of NMT and AK2; AK2 myristoylation stabilizes the complex. Post-translationally, myristoylation is required for cell membrane localization. May be palmitoylated at Cys-4 which stabilizes cell membrane localization of the myristoylated protein.

It localises to the parasitophorous vacuole membrane. It catalyses the reaction AMP + ATP = 2 ADP. In terms of biological role, catalyzes the reversible transfer of the terminal phosphate group between ATP and AMP. Has very low activity with CTP, GTP, ITP and UTP and no activity with GMP, UMP or IMP in vitro. This chain is Adenylate kinase 2, found in Plasmodium falciparum (isolate 3D7).